The chain runs to 369 residues: Proton-coupled zinc antiporter SLC30A8 (369 aa).

The Cytoplasmic segment spans residues 1–79 (MEFLERTYLV…AKWKLCSASA (79 aa)). A disordered region spans residues 31–52 (PVNKDQCPRERPEELESGGMYH). The span at 32 to 44 (VNKDQCPRERPEE) shows a compositional bias: basic and acidic residues. Positions 52, 53, and 54 each coordinate Zn(2+). The HCH Motif; seals regulatory zinc-binding pocket motif lies at 52–54 (HCH). A helical transmembrane segment spans residues 80-100 (ICFIFMIAEVVGGHIAGSLAV). At 101–103 (VTD) the chain is on the lumenal, vesicle side. Residues 104 to 124 (AAHLLIDLTSFLLSLFSLWLS) traverse the membrane as a helical segment. Residues His-106, Asp-110, and His-137 each contribute to the Zn(2+) site. The Cytoplasmic segment spans residues 125-140 (SKPPSKRLTFGWHRAE). A helical transmembrane segment spans residues 141-161 (ILGALLSILCIWVVTGVLVYL). Residues 162–175 (ACERLLYPDYQIQA) lie on the Lumenal, vesicle side of the membrane. Residues 176–196 (TVMIIVSSCAVAANIVLTVVL) form a helical membrane-spanning segment. Topologically, residues 197–217 (HQRCLGHNHKEVQANASVRAA) are cytoplasmic. The chain crosses the membrane as a helical span at residues 218 to 238 (FVHALGDLFQSISVLISALII). His-220 and Asp-224 together coordinate Zn(2+). The Lumenal, vesicle segment spans residues 239-245 (YFKPEYK). The chain crosses the membrane as a helical span at residues 246–266 (IADPICTFIFSILVLASTITI). Topologically, residues 267 to 369 (LKDFSILLME…DCLFCEDPCD (103 aa)) are cytoplasmic. Residues His-301, His-318, His-345, Glu-352, Cys-361, and Cys-364 each contribute to the Zn(2+) site.

The protein belongs to the cation diffusion facilitator (CDF) transporter (TC 2.A.4) family. SLC30A subfamily. Homodimer. In the endocrine pancreas, expressed in insulin-producing beta cells. Expressed at relatively high levels in subcutaneous fat tissue from lean persons; much lower levels in visceral fat, whether from lean or obese individuals, and in subcutaneous fat tissue from obese individuals. Expressed in peripheral blood mononuclear cells, including T-cells and B-cells, with great variation among individuals ranging from negative to strongly positive.

It is found in the cytoplasmic vesicle. It localises to the secretory vesicle membrane. The protein resides in the cell membrane. It catalyses the reaction Zn(2+)(in) + 2 H(+)(out) = Zn(2+)(out) + 2 H(+)(in). Proton-coupled zinc ion antiporter mediating the entry of zinc into the lumen of pancreatic beta cell secretory granules, thereby regulating insulin secretion. This Homo sapiens (Human) protein is Proton-coupled zinc antiporter SLC30A8.